The chain runs to 328 residues: Probable cell division protein WhiA (328 aa).

The segment at residues 275 to 308 is a DNA-binding region (H-T-H motif); the sequence is SLEELGQLHDPVLTKDAIAGRIRRLLAMADKRAE.

Belongs to the WhiA family.

Its function is as follows. Involved in cell division and chromosome segregation. This Nocardioides sp. (strain ATCC BAA-499 / JS614) protein is Probable cell division protein WhiA.